Reading from the N-terminus, the 937-residue chain is Guanine nucleotide exchange protein SMCR8 (937 aa).

Positions 1 to 349 are required for the homodimerization of the C9orf72-SMCR8 complex; the sequence is MISAPDVVAF…HIEHMFRGDL (349 aa). The 173-residue stretch at 48 to 220 folds into the uDENN FLCN/SMCR8-type domain; that stretch reads LSGAKFSRDF…TETEIQKKAN (173 aa). 2 disordered regions span residues 274–293 and 384–405; these read IQDQASQASTTSNPDESADT and EKQESIPSKPSQDRPPSSSLEE. 2 stretches are compositionally biased toward polar residues: residues 276–288 and 388–403; these read DQASQASTTSNPD and SIPSKPSQDRPPSSSL. A cDENN FLCN/SMCR8-type domain is found at 318–835; sequence KLKTLEELCD…LVPRLADHRT (518 aa). Position 402 is a phosphoserine; by TBK1 (Ser-402). Phosphoserine occurs at positions 417, 468, 471, 489, 492, and 498. The disordered stretch occupies residues 564-645; that stretch reads PELGETEEGS…NPSSRDNSCE (82 aa). Residues 574–583 show a composition bias toward polar residues; sequence IENTPSQIDS. Position 790 is a phosphoserine (Ser-790). The residue at position 796 (Thr-796) is a Phosphothreonine; by TBK1. The dDENN FLCN/SMCR8-type domain maps to 844–910; sequence YLHVQSMLTQ…VVQYLAELLK (67 aa). The interacts with WDR41 within the C9orf72-SMCR8 complex stretch occupies residues 862–914; the sequence is TFCHHLHLPTHDKETEELVASRQMSFLKLTLGLVNEDVRVVQYLAELLKLHYM.

The protein belongs to the SMCR8 family. As to quaternary structure, component of the C9orf72-SMCR8 complex, at least composed of C9orf72, SMCR8 and WDR41. The complex is formed of two protomers, each individually consisting of one molecule each of C9orf72, SMCR8 and WDR41. The protomers homodimerize via an interaction between C9orf72 (via C-terminus) and SMCR8 (via N-terminus). Within each protomer SMCR8 (via DENN domain) acts as a bridging protein between WDR41 (via C-terminus and N-terminus) and C9orf72 (via C-terminus). The C9orf72-SMCR8 complex associates with the ULK1/ATG1 kinase complex. Interacts with C9orf72; the interaction is direct. Interacts with DLG4/PSD-95. Post-translationally, phosphorylation by TBK1 is required to promote autophagosome maturation. Phosphorylated by ULK1. Expressed in all tissues tested.

It is found in the cytoplasm. The protein localises to the nucleus. Its subcellular location is the presynapse. The protein resides in the postsynapse. Component of the C9orf72-SMCR8 complex, a complex that has guanine nucleotide exchange factor (GEF) activity and regulates autophagy. In the complex, C9orf72 and SMCR8 probably constitute the catalytic subunits that promote the exchange of GDP to GTP, converting inactive GDP-bound RAB8A and RAB39B into their active GTP-bound form, thereby promoting autophagosome maturation. The C9orf72-SMCR8 complex also acts as a negative regulator of autophagy initiation by interacting with the ULK1/ATG1 kinase complex and inhibiting its protein kinase activity. As part of the C9orf72-SMCR8 complex, stimulates RAB8A and RAB11A GTPase activity in vitro. Acts as a regulator of mTORC1 signaling by promoting phosphorylation of mTORC1 substrates. In addition to its activity in the cytoplasm within the C9orf72-SMCR8 complex, SMCR8 also localizes in the nucleus, where it associates with chromatin and negatively regulates expression of suppresses ULK1 and WIPI2 genes. The polypeptide is Guanine nucleotide exchange protein SMCR8 (Homo sapiens (Human)).